The sequence spans 475 residues: AP-1 complex subunit mu-1-I (475 aa).

The MHD domain maps to 175-473 (KNEAFLDIVE…TQSGDDYTIR (299 aa)). The segment at 240 to 262 (ASATTSDNNTETDKKPSITSSSA) is disordered.

This sequence belongs to the adaptor complexes medium subunit family. In terms of assembly, adaptor protein complex 1 (AP-1) is a heterotetramer composed of two large adaptins (gamma-type subunit APL4 and beta-type subunit APL2), a medium adaptin (mu-type subunit APM1) and a small adaptin (sigma-type subunit APS1). AP-1 interacts with clathrin.

The protein localises to the cytoplasmic vesicle. Its subcellular location is the clathrin-coated vesicle membrane. It is found in the membrane. It localises to the clathrin-coated pit. Functionally, component of the adaptor complexes which link clathrin to receptors in coated vesicles. Clathrin-associated protein complexes are believed to interact with the cytoplasmic tails of membrane proteins, leading to their selection and concentration. The AP-1 complex interacts directly with clathrin. AP57 is probably a subunit of the Golgi membrane adaptor. The sequence is that of AP-1 complex subunit mu-1-I (APM1) from Saccharomyces cerevisiae (strain ATCC 204508 / S288c) (Baker's yeast).